A 249-amino-acid chain; its full sequence is UDP-2,3-diacylglucosamine hydrolase (249 aa).

Mn(2+) is bound by residues D7, H9, D40, N78, and H113. Residue 78 to 79 participates in substrate binding; the sequence is NR. Residues D121, S159, T163, K166, and H194 each coordinate substrate. Residues H194 and H196 each coordinate Mn(2+).

The protein belongs to the LpxH family. Mn(2+) serves as cofactor.

It localises to the cell inner membrane. It carries out the reaction UDP-2-N,3-O-bis[(3R)-3-hydroxytetradecanoyl]-alpha-D-glucosamine + H2O = 2-N,3-O-bis[(3R)-3-hydroxytetradecanoyl]-alpha-D-glucosaminyl 1-phosphate + UMP + 2 H(+). The protein operates within glycolipid biosynthesis; lipid IV(A) biosynthesis; lipid IV(A) from (3R)-3-hydroxytetradecanoyl-[acyl-carrier-protein] and UDP-N-acetyl-alpha-D-glucosamine: step 4/6. Functionally, hydrolyzes the pyrophosphate bond of UDP-2,3-diacylglucosamine to yield 2,3-diacylglucosamine 1-phosphate (lipid X) and UMP by catalyzing the attack of water at the alpha-P atom. Involved in the biosynthesis of lipid A, a phosphorylated glycolipid that anchors the lipopolysaccharide to the outer membrane of the cell. This Pseudomonas fluorescens (strain SBW25) protein is UDP-2,3-diacylglucosamine hydrolase.